Consider the following 433-residue polypeptide: Nuclear distribution protein PAC1 (433 aa).

The LisH domain maps to 8 to 40; sequence QKDELHRAMLAYLHAAGMHNAYAALQHDAALAD. Positions 57 to 84 form a coiled coil; the sequence is SVIRLQKKVIDLENRNAALLAELAAAAR. 7 WD repeats span residues 103–144, 146–184, 188–227, 230–269, 272–336, 339–378, and 381–429; these read SHRA…RTLK, HTKA…TNVK, GHDH…CIKT, GHAE…TKME, GHEH…CLRT, GHDN…CTKT, and AHSH…QTIK.

The protein belongs to the WD repeat LIS1/nudF family. In terms of assembly, self-associates. Interacts with NDL1 and dynein.

It is found in the cytoplasm. The protein resides in the cytoskeleton. The protein localises to the spindle pole. Positively regulates the activity of the minus-end directed microtubule motor protein dynein. Plays a central role in positioning the mitotic spindle at the bud neck during cell division. Targets cytoplasmic dynein to microtubule plus ends, thereby promoting dynein-mediated microtubule sliding along the bud cortex and consequently the movement of the mitotic spindle to the bud neck. This chain is Nuclear distribution protein PAC1, found in Cryptococcus neoformans var. neoformans serotype D (strain B-3501A) (Filobasidiella neoformans).